Consider the following 449-residue polypeptide: Probable glycine dehydrogenase (decarboxylating) subunit 1 (449 aa).

This sequence belongs to the GcvP family. N-terminal subunit subfamily. In terms of assembly, the glycine cleavage system is composed of four proteins: P, T, L and H. In this organism, the P 'protein' is a heterodimer of two subunits.

It carries out the reaction N(6)-[(R)-lipoyl]-L-lysyl-[glycine-cleavage complex H protein] + glycine + H(+) = N(6)-[(R)-S(8)-aminomethyldihydrolipoyl]-L-lysyl-[glycine-cleavage complex H protein] + CO2. The glycine cleavage system catalyzes the degradation of glycine. The P protein binds the alpha-amino group of glycine through its pyridoxal phosphate cofactor; CO(2) is released and the remaining methylamine moiety is then transferred to the lipoamide cofactor of the H protein. The protein is Probable glycine dehydrogenase (decarboxylating) subunit 1 of Oceanobacillus iheyensis (strain DSM 14371 / CIP 107618 / JCM 11309 / KCTC 3954 / HTE831).